We begin with the raw amino-acid sequence, 961 residues long: Valine--tRNA ligase (961 aa).

A 'HIGH' region motif is present at residues 48–58 (PNVTGSLHMGH). The short motif at 560 to 564 (KMSKS) is the 'KMSKS' region element. Lys563 provides a ligand contact to ATP. A coiled-coil region spans residues 892–961 (FINKDTELAR…QAQFKAIEAL (70 aa)).

This sequence belongs to the class-I aminoacyl-tRNA synthetase family. ValS type 1 subfamily. As to quaternary structure, monomer.

The protein localises to the cytoplasm. It carries out the reaction tRNA(Val) + L-valine + ATP = L-valyl-tRNA(Val) + AMP + diphosphate. Its function is as follows. Catalyzes the attachment of valine to tRNA(Val). As ValRS can inadvertently accommodate and process structurally similar amino acids such as threonine, to avoid such errors, it has a 'posttransfer' editing activity that hydrolyzes mischarged Thr-tRNA(Val) in a tRNA-dependent manner. This Haemophilus ducreyi (strain 35000HP / ATCC 700724) protein is Valine--tRNA ligase.